The following is a 292-amino-acid chain: Formamidopyrimidine-DNA glycosylase (292 aa).

Proline 2 acts as the Schiff-base intermediate with DNA in catalysis. Glutamate 3 (proton donor) is an active-site residue. Residue lysine 60 is the Proton donor; for beta-elimination activity of the active site. Histidine 109, arginine 128, and arginine 173 together coordinate DNA. An FPG-type zinc finger spans residues asparagine 258–lysine 292. The active-site Proton donor; for delta-elimination activity is arginine 282.

This sequence belongs to the FPG family. As to quaternary structure, monomer. Zn(2+) is required as a cofactor.

It carries out the reaction Hydrolysis of DNA containing ring-opened 7-methylguanine residues, releasing 2,6-diamino-4-hydroxy-5-(N-methyl)formamidopyrimidine.. The catalysed reaction is 2'-deoxyribonucleotide-(2'-deoxyribose 5'-phosphate)-2'-deoxyribonucleotide-DNA = a 3'-end 2'-deoxyribonucleotide-(2,3-dehydro-2,3-deoxyribose 5'-phosphate)-DNA + a 5'-end 5'-phospho-2'-deoxyribonucleoside-DNA + H(+). Functionally, involved in base excision repair of DNA damaged by oxidation or by mutagenic agents. Acts as a DNA glycosylase that recognizes and removes damaged bases. Has a preference for oxidized purines, such as 7,8-dihydro-8-oxoguanine (8-oxoG). Has AP (apurinic/apyrimidinic) lyase activity and introduces nicks in the DNA strand. Cleaves the DNA backbone by beta-delta elimination to generate a single-strand break at the site of the removed base with both 3'- and 5'-phosphates. The polypeptide is Formamidopyrimidine-DNA glycosylase (Prochlorococcus marinus (strain MIT 9301)).